A 114-amino-acid chain; its full sequence is Flagellar hook-basal body complex protein FliE (114 aa).

The protein belongs to the FliE family.

It is found in the bacterial flagellum basal body. This chain is Flagellar hook-basal body complex protein FliE, found in Burkholderia vietnamiensis (strain G4 / LMG 22486) (Burkholderia cepacia (strain R1808)).